A 430-amino-acid chain; its full sequence is UDP-N-acetylglucosamine 1-carboxyvinyltransferase 1 (430 aa).

22-23 is a phosphoenolpyruvate binding site; that stretch reads KN. R93 contributes to the UDP-N-acetyl-alpha-D-glucosamine binding site. C117 acts as the Proton donor in catalysis. Residue C117 is modified to 2-(S-cysteinyl)pyruvic acid O-phosphothioketal. UDP-N-acetyl-alpha-D-glucosamine contacts are provided by residues 122–126, D305, and V327; that span reads RPVDL.

The protein belongs to the EPSP synthase family. MurA subfamily.

It localises to the cytoplasm. It catalyses the reaction phosphoenolpyruvate + UDP-N-acetyl-alpha-D-glucosamine = UDP-N-acetyl-3-O-(1-carboxyvinyl)-alpha-D-glucosamine + phosphate. The protein operates within cell wall biogenesis; peptidoglycan biosynthesis. Cell wall formation. Adds enolpyruvyl to UDP-N-acetylglucosamine. This Listeria innocua serovar 6a (strain ATCC BAA-680 / CLIP 11262) protein is UDP-N-acetylglucosamine 1-carboxyvinyltransferase 1.